A 160-amino-acid chain; its full sequence is Transmembrane protein 191A (160 aa).

The chain crosses the membrane as a helical span at residues 24-44 (FCFPLDFVSNLFWIFASKFII).

Belongs to the TMEM191 family.

The protein localises to the membrane. The polypeptide is Transmembrane protein 191A (TMEM191A) (Homo sapiens (Human)).